The sequence spans 73 residues: Defensin-like protein 87 (73 aa).

An N-terminal signal peptide occupies residues 1 to 27; the sequence is MTTKKTSSVVLPLLLVFALILMPMVAG. 3 disulfides stabilise this stretch: Cys-33-Cys-71, Cys-45-Cys-69, and Cys-49-Cys-70.

Belongs to the DEFL family.

It is found in the secreted. This chain is Defensin-like protein 87, found in Arabidopsis thaliana (Mouse-ear cress).